A 346-amino-acid polypeptide reads, in one-letter code: Methylthioribose-1-phosphate isomerase (346 aa).

Substrate-binding positions include 48-50 (RGA), arginine 88, and glutamine 192. The active-site Proton donor is the aspartate 233. Substrate is bound at residue 243–244 (NK).

It belongs to the eIF-2B alpha/beta/delta subunits family. MtnA subfamily.

The catalysed reaction is 5-(methylsulfanyl)-alpha-D-ribose 1-phosphate = 5-(methylsulfanyl)-D-ribulose 1-phosphate. It participates in amino-acid biosynthesis; L-methionine biosynthesis via salvage pathway; L-methionine from S-methyl-5-thio-alpha-D-ribose 1-phosphate: step 1/6. Its function is as follows. Catalyzes the interconversion of methylthioribose-1-phosphate (MTR-1-P) into methylthioribulose-1-phosphate (MTRu-1-P). This is Methylthioribose-1-phosphate isomerase from Alcanivorax borkumensis (strain ATCC 700651 / DSM 11573 / NCIMB 13689 / SK2).